The primary structure comprises 283 residues: Bifunctional protein FolD (283 aa).

NADP(+)-binding positions include 165 to 167, Ser-190, and Ile-231; that span reads GRS.

This sequence belongs to the tetrahydrofolate dehydrogenase/cyclohydrolase family. In terms of assembly, homodimer.

It carries out the reaction (6R)-5,10-methylene-5,6,7,8-tetrahydrofolate + NADP(+) = (6R)-5,10-methenyltetrahydrofolate + NADPH. The enzyme catalyses (6R)-5,10-methenyltetrahydrofolate + H2O = (6R)-10-formyltetrahydrofolate + H(+). It functions in the pathway one-carbon metabolism; tetrahydrofolate interconversion. Functionally, catalyzes the oxidation of 5,10-methylenetetrahydrofolate to 5,10-methenyltetrahydrofolate and then the hydrolysis of 5,10-methenyltetrahydrofolate to 10-formyltetrahydrofolate. This chain is Bifunctional protein FolD, found in Herminiimonas arsenicoxydans.